Here is a 957-residue protein sequence, read N- to C-terminus: Glycine dehydrogenase (decarboxylating) (957 aa).

N6-(pyridoxal phosphate)lysine is present on Lys-708.

Belongs to the GcvP family. As to quaternary structure, the glycine cleavage system is composed of four proteins: P, T, L and H. Pyridoxal 5'-phosphate serves as cofactor.

It catalyses the reaction N(6)-[(R)-lipoyl]-L-lysyl-[glycine-cleavage complex H protein] + glycine + H(+) = N(6)-[(R)-S(8)-aminomethyldihydrolipoyl]-L-lysyl-[glycine-cleavage complex H protein] + CO2. The glycine cleavage system catalyzes the degradation of glycine. The P protein binds the alpha-amino group of glycine through its pyridoxal phosphate cofactor; CO(2) is released and the remaining methylamine moiety is then transferred to the lipoamide cofactor of the H protein. The chain is Glycine dehydrogenase (decarboxylating) from Escherichia coli O157:H7.